We begin with the raw amino-acid sequence, 356 residues long: D-alanine--D-alanine ligase (356 aa).

The ATP-grasp domain occupies 146–350; the sequence is KKLLVAEGLP…YAELLDTLIQ (205 aa). 173-228 contacts ATP; the sequence is KERLGLPVFVKPARGGSSIGVSKVSAWEDLEAALTLAYESDDKVLIEPEISGAEVE. 3 residues coordinate Mg(2+): Asp-305, Glu-317, and Asn-319.

This sequence belongs to the D-alanine--D-alanine ligase family. Requires Mg(2+) as cofactor. Mn(2+) is required as a cofactor.

It localises to the cytoplasm. It catalyses the reaction 2 D-alanine + ATP = D-alanyl-D-alanine + ADP + phosphate + H(+). Its pathway is cell wall biogenesis; peptidoglycan biosynthesis. Functionally, cell wall formation. This Corynebacterium aurimucosum (strain ATCC 700975 / DSM 44827 / CIP 107346 / CN-1) (Corynebacterium nigricans) protein is D-alanine--D-alanine ligase.